The primary structure comprises 421 residues: Forkhead box protein J1 (421 aa).

2 disordered regions span residues 1-34 and 48-116; these read MAES…DSLT and KAPA…DYAT. Residues 66 to 80 show a composition bias toward low complexity; it reads PGSAAPGSPLAADPA. Over residues 90–99 the composition is skewed to polar residues; the sequence is KPTSSCTSRS. The fork-head DNA-binding region spans 120–210; the sequence is VKPPYSYATL…YAERLLSGAF (91 aa). The disordered stretch occupies residues 261–302; sequence AGWGAGEGRLGHKRKQPLPKRVAKVPRPPSTLLPTPEEQGEL. Residues 271–284 are compositionally biased toward basic residues; it reads GHKRKQPLPKRVAK.

The protein belongs to the FOXJ1 family. Testis, oviduct, lung and brain cortex.

It localises to the nucleus. Functionally, transcription factor specifically required for the formation of motile cilia. Acts by activating transcription of genes that mediate assembly of motile cilia, such as CFAP157. Binds the DNA consensus sequences 5'-HWDTGTTTGTTTA-3' or 5'-KTTTGTTGTTKTW-3' (where H is not G, W is A or T, D is not C, and K is G or T). Activates the transcription of a variety of ciliary proteins in the developing brain and lung. This is Forkhead box protein J1 from Homo sapiens (Human).